Here is a 354-residue protein sequence, read N- to C-terminus: 2-methylisoborneol synthase (354 aa).

Residues Met-1–Pro-29 are disordered. Mg(2+) contacts are provided by Asp-113, Asp-114, Glu-118, Asn-264, Ser-268, and Glu-272.

This sequence belongs to the terpene synthase family. 2-methylisoborneol synthase subfamily. Mg(2+) serves as cofactor.

It catalyses the reaction (E)-2-methylgeranyl diphosphate + H2O = 2-methylisoborneol + diphosphate. Its function is as follows. Catalyzes the cyclization of 2-methylgeranyl diphosphate (2-MeGPP) to 2-methylisoborneol (2-MIB), which likely involves the intermediacy of 2-methyllinalyl diphosphate. The sequence is that of 2-methylisoborneol synthase from Saccharopolyspora erythraea (strain ATCC 11635 / DSM 40517 / JCM 4748 / NBRC 13426 / NCIMB 8594 / NRRL 2338).